Reading from the N-terminus, the 351-residue chain is Translation initiation factor eIF2B subunit beta (351 aa).

Belongs to the eIF-2B alpha/beta/delta subunits family. Component of the translation initiation factor 2B (eIF2B) complex which is a heterodecamer of two sets of five different subunits: alpha, beta, gamma, delta and epsilon. Subunits alpha, beta and delta comprise a regulatory subcomplex and subunits epsilon and gamma comprise a catalytic subcomplex. Within the complex, the hexameric regulatory complex resides at the center, with the two heterodimeric catalytic subcomplexes bound on opposite sides.

The protein localises to the cytoplasm. The protein resides in the cytosol. With respect to regulation, activated by the chemical integrated stress response (ISR) inhibitor ISRIB which stimulates guanine nucleotide exchange factor activity for both phosphorylated and unphosphorylated eIF2. Its function is as follows. Acts as a component of the translation initiation factor 2B (eIF2B) complex, which catalyzes the exchange of GDP for GTP on eukaryotic initiation factor 2 (eIF2) gamma subunit. Its guanine nucleotide exchange factor activity is repressed when bound to eIF2 complex phosphorylated on the alpha subunit, thereby limiting the amount of methionyl-initiator methionine tRNA available to the ribosome and consequently global translation is repressed. In Mus musculus (Mouse), this protein is Translation initiation factor eIF2B subunit beta (Eif2b2).